The following is a 51-amino-acid chain: Large ribosomal subunit protein eL39 (51 aa).

Belongs to the eukaryotic ribosomal protein eL39 family.

The sequence is that of Large ribosomal subunit protein eL39 from Hyperthermus butylicus (strain DSM 5456 / JCM 9403 / PLM1-5).